A 371-amino-acid polypeptide reads, in one-letter code: DNA primase DnaG (371 aa).

The Toprim domain maps to Asp-173–Pro-248. 3 residues coordinate Mg(2+): Glu-179, Asp-221, and Asp-223.

This sequence belongs to the archaeal DnaG primase family. In terms of assembly, forms a ternary complex with MCM helicase and DNA. Component of the archaeal exosome complex. Requires Mg(2+) as cofactor.

The catalysed reaction is ssDNA + n NTP = ssDNA/pppN(pN)n-1 hybrid + (n-1) diphosphate.. Its function is as follows. RNA polymerase that catalyzes the synthesis of short RNA molecules used as primers for DNA polymerase during DNA replication. Also part of the exosome, which is a complex involved in RNA degradation. Acts as a poly(A)-binding protein that enhances the interaction between heteromeric, adenine-rich transcripts and the exosome. The protein is DNA primase DnaG of Nanoarchaeum equitans (strain Kin4-M).